The chain runs to 469 residues: Argininosuccinate lyase (469 aa).

The protein belongs to the lyase 1 family. Argininosuccinate lyase subfamily.

It localises to the cytoplasm. It carries out the reaction 2-(N(omega)-L-arginino)succinate = fumarate + L-arginine. Its pathway is amino-acid biosynthesis; L-arginine biosynthesis; L-arginine from L-ornithine and carbamoyl phosphate: step 3/3. The protein is Argininosuccinate lyase of Burkholderia cenocepacia (strain HI2424).